A 1977-amino-acid chain; its full sequence is Protein rotatin homolog (1977 aa).

The tract at residues 141–166 is disordered; it reads SVSSLSSNDIPSQATESADSSSNQIY.

It belongs to the rotatin family. In terms of assembly, interacts with Rcd4;this complex is recruited to daughter centrioles before their conversion to centrosomes.

Its subcellular location is the cytoplasm. The protein resides in the cytoskeleton. The protein localises to the microtubule organizing center. It localises to the centrosome. It is found in the centriole. Functionally, participes in the structural integrity of both centrioles and basal bodies and in centriole cohesion. Participates in the later stages of centriole assembly through the interaction with Rcd4 leading to the centriole to centrosome conversion. This chain is Protein rotatin homolog, found in Drosophila melanogaster (Fruit fly).